Here is a 283-residue protein sequence, read N- to C-terminus: MLIIETLPLLRQQIRRLRMEGKRVALVPTMGNLHDGHMKLVDEAKAHADVVVVSIFVNPMQFDRPEDLARYPRTLQEDCEKLNKRKVDLVFAPSVKEIYPNGTETHTYVDVPGLSTMLEGASRPGHFRGVSTIVSKLFNLVQPDIACFGEKDFQQLALIRKMVADMGFDIEIVGVPIMRAKDGLALSSRNGYLTAEQRKIAPGLYKVLSSIADKLQAGERDLDEIIAIAGQELNEKGFRSDDIQIRDADTLLEVSENSKRAVILVAAWLGDARLIDNKLVELA.

Met30 to His37 serves as a coordination point for ATP. The active-site Proton donor is His37. Gln61 lines the (R)-pantoate pocket. Residue Gln61 coordinates beta-alanine. ATP is bound at residue Gly149–Asp152. Gln155 lines the (R)-pantoate pocket. Position 186-189 (Leu186–Arg189) interacts with ATP.

This sequence belongs to the pantothenate synthetase family. As to quaternary structure, homodimer.

It localises to the cytoplasm. The catalysed reaction is (R)-pantoate + beta-alanine + ATP = (R)-pantothenate + AMP + diphosphate + H(+). Its pathway is cofactor biosynthesis; (R)-pantothenate biosynthesis; (R)-pantothenate from (R)-pantoate and beta-alanine: step 1/1. In terms of biological role, catalyzes the condensation of pantoate with beta-alanine in an ATP-dependent reaction via a pantoyl-adenylate intermediate. The sequence is that of Pantothenate synthetase from Escherichia coli O45:K1 (strain S88 / ExPEC).